The following is a 429-amino-acid chain: Glutamate-1-semialdehyde 2,1-aminomutase (429 aa).

Lys-267 bears the N6-(pyridoxal phosphate)lysine mark.

It belongs to the class-III pyridoxal-phosphate-dependent aminotransferase family. HemL subfamily. Homodimer. The cofactor is pyridoxal 5'-phosphate.

The protein resides in the cytoplasm. The catalysed reaction is (S)-4-amino-5-oxopentanoate = 5-aminolevulinate. The protein operates within porphyrin-containing compound metabolism; protoporphyrin-IX biosynthesis; 5-aminolevulinate from L-glutamyl-tRNA(Glu): step 2/2. In Anaeromyxobacter sp. (strain Fw109-5), this protein is Glutamate-1-semialdehyde 2,1-aminomutase.